Reading from the N-terminus, the 598-residue chain is Arginine--tRNA ligase (598 aa).

The 'HIGH' region signature appears at 139–149 (ANPTGPMHVGH).

This sequence belongs to the class-I aminoacyl-tRNA synthetase family. As to quaternary structure, monomer.

Its subcellular location is the cytoplasm. It catalyses the reaction tRNA(Arg) + L-arginine + ATP = L-arginyl-tRNA(Arg) + AMP + diphosphate. The chain is Arginine--tRNA ligase from Bradyrhizobium sp. (strain ORS 278).